Here is a 57-residue protein sequence, read N- to C-terminus: Large ribosomal subunit protein uL30 (57 aa).

Belongs to the universal ribosomal protein uL30 family. Part of the 50S ribosomal subunit.

This is Large ribosomal subunit protein uL30 from Clostridium acetobutylicum (strain ATCC 824 / DSM 792 / JCM 1419 / IAM 19013 / LMG 5710 / NBRC 13948 / NRRL B-527 / VKM B-1787 / 2291 / W).